The following is a 189-amino-acid chain: Glycerol-3-phosphate acyltransferase (189 aa).

The next 5 membrane-spanning stretches (helical) occupy residues 1 to 21 (MFWS…AIVL), 50 to 70 (KLAI…VLLA), 81 to 101 (AWVG…RFQG), 111 to 131 (MLMA…VLTF), and 151 to 171 (LLAW…LMIV).

It belongs to the PlsY family. In terms of assembly, probably interacts with PlsX.

The protein resides in the cell inner membrane. It carries out the reaction an acyl phosphate + sn-glycerol 3-phosphate = a 1-acyl-sn-glycero-3-phosphate + phosphate. Its pathway is lipid metabolism; phospholipid metabolism. In terms of biological role, catalyzes the transfer of an acyl group from acyl-phosphate (acyl-PO(4)) to glycerol-3-phosphate (G3P) to form lysophosphatidic acid (LPA). This enzyme utilizes acyl-phosphate as fatty acyl donor, but not acyl-CoA or acyl-ACP. The polypeptide is Glycerol-3-phosphate acyltransferase (Pseudomonas entomophila (strain L48)).